The primary structure comprises 372 residues: Serine protease inhibitor 42Dd (372 aa).

Positions 1-15 (MYYLCIFLWVTSVAC) are cleaved as a signal peptide. Residues Asn197 and Asn232 are each glycosylated (N-linked (GlcNAc...) asparagine).

The protein belongs to the serpin family. As to expression, expressed in the ovary.

It localises to the secreted. Serine protease inhibitor with activity toward trypsin. Involved in innate immunity to fungal infection by negatively regulating the Toll signaling pathway and suppressing the expression of the antifungal peptide drosomycin. Acts upstream of SPE and grass, and downstream of the fungal cell wall pattern recognition receptor GNBP3. May function specifically in the GNBP3-dependent beta-1,3-glucan branch of the Toll pathway. This is Serine protease inhibitor 42Dd from Drosophila melanogaster (Fruit fly).